Consider the following 538-residue polypeptide: RNA-binding protein Ro60 (538 aa).

At Met-1 the chain carries N-acetylmethionine. 2 positions are modified to phosphoserine: Ser-4 and Ser-19. A TROVE domain is found at 16 to 369; that stretch reads VVNSEGGCVW…TFKTVEPTGK (354 aa). Residues 120-284 form an RNA-binding region; that stretch reads RIPTHLFTFI…EMPLTALLRN (165 aa). Residue Lys-224 is modified to N6-acetyllysine. The segment at 361–538 is VWFA-like domain; sequence FKTVEPTGKR…VIRNFTLDVI (178 aa). 3 residues coordinate a divalent metal cation: Ser-378, Ser-380, and Thr-445.

Belongs to the Ro 60 kDa family. As to quaternary structure, identified in a IGF2BP1-dependent mRNP granule complex containing untranslated mRNAs. Found in a complex with PUF60 and Y5 RNA. Interacts with RAB11FIP5. As to expression, highest in brain, followed by lung, muscle, kidney and heart. Lower levels are found in testis, liver and spleen.

It is found in the cytoplasm. RNA-binding protein that binds to misfolded non-coding RNAs, pre-5S rRNA, and several small cytoplasmic RNA molecules known as Y RNAs. May play roles in cilia formation and/or maintenance. The protein is RNA-binding protein Ro60 of Mus musculus (Mouse).